Reading from the N-terminus, the 63-residue chain is Large ribosomal subunit protein bL28 (63 aa).

This sequence belongs to the bacterial ribosomal protein bL28 family.

This is Large ribosomal subunit protein bL28 from Geobacter metallireducens (strain ATCC 53774 / DSM 7210 / GS-15).